The primary structure comprises 196 residues: MTGDCMPVLVLMAAVLTVTGAVPVARLRGALPDARGCHIAQFKSLSPQELQAFKRAKDALEESLLLKDCKCRSRLFPRTWDLRQLQVRERPVALEAELALTLKVLEATADTDPALGDVLDQPLHTLHHILSQLRACIQPQPTAGPRTRGRLHHWLHRLQEAPKKESPGCLEASVTFNLFRLLTRDLNCVASGDLCV.

Residues M1–A21 form the signal peptide. 3 disulfides stabilise this stretch: C37/C136, C71/C169, and C188/C195.

It belongs to the lambda interferon family.

It localises to the secreted. Cytokine with antiviral, antitumour and immunomodulatory activities. Plays a critical role in the antiviral host defense, predominantly in the epithelial tissues. Acts as a ligand for the heterodimeric class II cytokine receptor composed of IL10RB and IFNLR1, and receptor engagement leads to the activation of the JAK/STAT signaling pathway resulting in the expression of IFN-stimulated genes (ISG), which mediate the antiviral state. Has a restricted receptor distribution and therefore restricted targets: is primarily active in epithelial cells and this cell type-selective action is because of the epithelial cell-specific expression of its receptor IFNLR1. Seems not to be essential for early virus-activated host defense in vaginal infection, but plays an important role in Toll-like receptor (TLR)-induced antiviral defense. Plays a significant role in the antiviral immune defense in the intestinal epithelium. Exerts an immunomodulatory effect by up-regulating MHC class I antigen expression. This chain is Interferon lambda-3 (IFNL3), found in Homo sapiens (Human).